The primary structure comprises 144 residues: MKTFSPTPKDINRQWFVVDAQDQVLGRLASQIAHRLRGKHKPEFAPHMDNGDFIVVVNCEKIKVTGNKLADKKYYRHSGWVGGLKTTILGDVLADKPSRALMAAVKGMLPKNRLGRAMLKKLKIYAGPEHPHTAQNPQPLTLPH.

The protein belongs to the universal ribosomal protein uL13 family. Part of the 50S ribosomal subunit.

This protein is one of the early assembly proteins of the 50S ribosomal subunit, although it is not seen to bind rRNA by itself. It is important during the early stages of 50S assembly. This chain is Large ribosomal subunit protein uL13, found in Desulfovibrio desulfuricans (strain ATCC 27774 / DSM 6949 / MB).